The sequence spans 1185 residues: Ubiquitin carboxyl-terminal hydrolase 36 (1185 aa).

A compositionally biased stretch (polar residues) spans 126–169 (TGKALSSNGHDNTNGVNGSSAATVNGNRKQTVEQSNQNSTTNPN). A disordered region spans residues 126–174 (TGKALSSNGHDNTNGVNGSSAATVNGNRKQTVEQSNQNSTTNPNELPKP). The USP domain occupies 199-509 (AGMLNVGNTC…NAYIMFYELD (311 aa)). Cys208 (nucleophile) is an active-site residue. The active-site Proton acceptor is the His468. 2 positions are modified to phosphoserine: Ser552 and Ser554. A compositionally biased stretch (low complexity) spans 642–658 (ANSNKSSCNNNTLTTNS). Disordered regions lie at residues 642 to 804 (ANSN…TDAI), 818 to 975 (HRAT…YQSE), 1056 to 1122 (APTL…GSFP), and 1136 to 1185 (NKFK…QQQS). The span at 670–683 (SDEEDEDEDSDDDV) shows a compositional bias: acidic residues. The residue at position 716 (Thr716) is a Phosphothreonine. Phosphoserine is present on residues Ser726 and Ser728. 2 stretches are compositionally biased toward low complexity: residues 778–797 (KSNG…SNNN) and 836–853 (QQQQ…SLIS). Ser867 is subject to Phosphoserine. A Phosphothreonine modification is found at Thr870. Ser873 is modified (phosphoserine). Positions 891 to 920 (DDNDDDDEDADEEDDADADAEQEEYDDEVV) are enriched in acidic residues. 2 stretches are compositionally biased toward polar residues: residues 924–942 (TTPS…SKPS) and 959–975 (SAKS…YQSE). Thr925 carries the phosphothreonine modification. Basic and acidic residues predominate over residues 1062-1071 (EAREQRKRDA). 2 stretches are compositionally biased toward low complexity: residues 1151-1161 (QQQRALQRHLA) and 1172-1185 (QSTG…QQQS).

This sequence belongs to the peptidase C19 family. In terms of assembly, interacts with atms/PAF1, but not with CycT.

Its subcellular location is the nucleus. The protein localises to the nucleolus. The enzyme catalyses Thiol-dependent hydrolysis of ester, thioester, amide, peptide and isopeptide bonds formed by the C-terminal Gly of ubiquitin (a 76-residue protein attached to proteins as an intracellular targeting signal).. Required for maintaining multiple types of adult stem cells, including male and female germline, epithelial follicle cell and intestinal stem cells. May function as a transcriptional repressor by continually deubiquiting histone H2B at the promoters of genes critical for cellular differentiation, thereby preventing histone H3 'Lys-4' trimethylation (H3K4). Controls selective autophagy activation by ubiquitinated proteins. The chain is Ubiquitin carboxyl-terminal hydrolase 36 (Usp36) from Drosophila mojavensis (Fruit fly).